A 236-amino-acid polypeptide reads, in one-letter code: 2,3,4,5-tetrahydropyridine-2,6-dicarboxylate N-acetyltransferase (236 aa).

The protein belongs to the transferase hexapeptide repeat family. DapH subfamily.

The enzyme catalyses (S)-2,3,4,5-tetrahydrodipicolinate + acetyl-CoA + H2O = L-2-acetamido-6-oxoheptanedioate + CoA. The protein operates within amino-acid biosynthesis; L-lysine biosynthesis via DAP pathway; LL-2,6-diaminopimelate from (S)-tetrahydrodipicolinate (acetylase route): step 1/3. Its function is as follows. Catalyzes the transfer of an acetyl group from acetyl-CoA to tetrahydrodipicolinate. In Lactiplantibacillus plantarum (strain ATCC BAA-793 / NCIMB 8826 / WCFS1) (Lactobacillus plantarum), this protein is 2,3,4,5-tetrahydropyridine-2,6-dicarboxylate N-acetyltransferase.